The following is a 375-amino-acid chain: Probable serine/threonine-protein kinase PBL28 (375 aa).

The residue at position 65 (threonine 65) is a Phosphothreonine. The region spanning 76-356 (FSDENLLGKG…MDCVKELQLI (281 aa)) is the Protein kinase domain. ATP-binding positions include 82–90 (LGKGGFGRV) and lysine 104. The residue at position 152 (tyrosine 152) is a Phosphotyrosine. The active-site Proton acceptor is aspartate 205. Residue threonine 245 is modified to Phosphothreonine. Position 253 is a phosphotyrosine (tyrosine 253).

It belongs to the protein kinase superfamily. Ser/Thr protein kinase family.

The protein resides in the cell membrane. The catalysed reaction is L-seryl-[protein] + ATP = O-phospho-L-seryl-[protein] + ADP + H(+). It catalyses the reaction L-threonyl-[protein] + ATP = O-phospho-L-threonyl-[protein] + ADP + H(+). May be involved in plant defense signaling. This is Probable serine/threonine-protein kinase PBL28 from Arabidopsis thaliana (Mouse-ear cress).